We begin with the raw amino-acid sequence, 133 residues long: Small ribosomal subunit protein uS8 (133 aa).

It belongs to the universal ribosomal protein uS8 family. Part of the 30S ribosomal subunit. Contacts proteins S5 and S12.

Its function is as follows. One of the primary rRNA binding proteins, it binds directly to 16S rRNA central domain where it helps coordinate assembly of the platform of the 30S subunit. The chain is Small ribosomal subunit protein uS8 from Chlamydia abortus (strain DSM 27085 / S26/3) (Chlamydophila abortus).